Here is a 758-residue protein sequence, read N- to C-terminus: Long-chain-alcohol oxidase FAO1 (758 aa).

The next 2 helical transmembrane spans lie at 102–122 (IVLR…LVCL) and 155–175 (PLAR…YFTW). 246 to 261 (CDAVVVGSGCGGGVAA) is an FAD binding site. The active-site Proton acceptor is the His-689.

This sequence belongs to the GMC oxidoreductase family.

The protein localises to the membrane. It catalyses the reaction a long-chain primary fatty alcohol + O2 = a long-chain fatty aldehyde + H2O2. Its function is as follows. Long-chain fatty alcohol oxidase involved in the omega-oxidation pathway of lipid degradation. The polypeptide is Long-chain-alcohol oxidase FAO1 (FAO1) (Arabidopsis thaliana (Mouse-ear cress)).